The following is a 279-amino-acid chain: Phosphatidylglycerol--prolipoprotein diacylglyceryl transferase (279 aa).

3 helical membrane-spanning segments follow: residues 18-38 (LSVRWYGIIIAVGILLGYFVA), 55-75 (IIFYSALFGFIAARIYFVIFQ), and 89-109 (IWHGGIAIHGGLIGGFIAGVI). R137 serves as a coordination point for a 1,2-diacyl-sn-glycero-3-phospho-(1'-sn-glycerol). 2 consecutive transmembrane segments (helical) span residues 203 to 223 (LGETFFLYLTWYSIGRFFIEG) and 235 to 255 (IRVAQLVSILLILISISLIVY).

It belongs to the Lgt family.

Its subcellular location is the cell membrane. The enzyme catalyses L-cysteinyl-[prolipoprotein] + a 1,2-diacyl-sn-glycero-3-phospho-(1'-sn-glycerol) = an S-1,2-diacyl-sn-glyceryl-L-cysteinyl-[prolipoprotein] + sn-glycerol 1-phosphate + H(+). The protein operates within protein modification; lipoprotein biosynthesis (diacylglyceryl transfer). In terms of biological role, catalyzes the transfer of the diacylglyceryl group from phosphatidylglycerol to the sulfhydryl group of the N-terminal cysteine of a prolipoprotein, the first step in the formation of mature lipoproteins. This Staphylococcus aureus (strain USA300) protein is Phosphatidylglycerol--prolipoprotein diacylglyceryl transferase.